Reading from the N-terminus, the 160-residue chain is Large ribosomal subunit protein uL22c (160 aa).

Belongs to the universal ribosomal protein uL22 family. In terms of assembly, part of the 50S ribosomal subunit.

It localises to the plastid. The protein localises to the chloroplast. Its function is as follows. This protein binds specifically to 23S rRNA. Functionally, the globular domain of the protein is located near the polypeptide exit tunnel on the outside of the subunit, while an extended beta-hairpin is found that lines the wall of the exit tunnel in the center of the 70S ribosome. In Crucihimalaya wallichii (Rock-cress), this protein is Large ribosomal subunit protein uL22c (rpl22).